The sequence spans 176 residues: MDLSEPIHDFLLVFLGSGLILGGLGVVLLPNPIYSAFSLGLVLICTSLFYILSNSYFVAAAQLLIYVGAINVLIIFAVMFMNGSEYYKDFHLWTVGDGITSMVCISLFISLITTISDTSWYGIIWTTRSNQIIEQDFLSNSQQIGIHLSTDFFLPFELISIILLVALIGAIAVARQ.

Transmembrane regions (helical) follow at residues 10-30, 32-52, 61-81, 92-112, and 152-172; these read FLLVFLGSGLILGGLGVVLLP, PIYSAFSLGLVLICTSLFYIL, AQLLIYVGAINVLIIFAVMFM, LWTVGDGITSMVCISLFISLI, and FFLPFELISIILLVALIGAIA.

It belongs to the complex I subunit 6 family. As to quaternary structure, NDH is composed of at least 16 different subunits, 5 of which are encoded in the nucleus.

It is found in the plastid. The protein resides in the chloroplast thylakoid membrane. It catalyses the reaction a plastoquinone + NADH + (n+1) H(+)(in) = a plastoquinol + NAD(+) + n H(+)(out). It carries out the reaction a plastoquinone + NADPH + (n+1) H(+)(in) = a plastoquinol + NADP(+) + n H(+)(out). NDH shuttles electrons from NAD(P)H:plastoquinone, via FMN and iron-sulfur (Fe-S) centers, to quinones in the photosynthetic chain and possibly in a chloroplast respiratory chain. The immediate electron acceptor for the enzyme in this species is believed to be plastoquinone. Couples the redox reaction to proton translocation, and thus conserves the redox energy in a proton gradient. This Solanum tuberosum (Potato) protein is NAD(P)H-quinone oxidoreductase subunit 6, chloroplastic (ndhG).